The primary structure comprises 283 residues: Lolitrem B biosynthesis cluster protein S (283 aa).

An N-terminal signal peptide occupies residues 1–27 (MSRSDWIFISLQGFFCLAGVIWKSREG). The next 5 helical transmembrane spans lie at 73–93 (WFWL…LIIL), 112–132 (LGYL…SLWI), 157–177 (IFWC…VATL), 219–239 (MTGT…ALEA), and 250–270 (VRMF…DVLL).

The protein belongs to the ltmS family.

It localises to the membrane. Part of the gene cluster that mediates the biosynthesis of lolitrems, indole-diterpene mycotoxins that are potent tremorgens in mammals, and are synthesized by clavicipitaceous fungal endophytes in association with their grass hosts. The geranylgeranyl diphosphate (GGPP) synthase ltmG is proposed to catalyze the first step in lolitrem biosynthesis. LtmG catalyzes a series of iterative condensations of isopentenyl diphosphate (IPP) with dimethylallyl diphosphate (DMAPP), geranyl diphosphate (GPP), and farnesyl diphosphate (FPP), to form GGPP. GGPP then condenses with indole-3-glycerol phosphate to form 3-geranylgeranylindole, an acyclic intermediate, to be incorporated into paxilline. Either ltmG or ltmC could be responsible for this step, as both are putative prenyl transferases. The FAD-dependent monooxygenase ltmM then catalyzes the epoxidation of the two terminal alkenes of the geranylgeranyl moiety, which is subsequently cyclized by ltmB, to paspaline. The cytochrome P450 monooxygenases ltmQ and ltmP can sequentially oxidize paspaline to terpendole E and terpendole F. Alternatively, ltmP converts paspaline to an intermediate which is oxidized by ltmQ to terpendole F. LtmF, ltmK, ltmE and ltmJ appear to be unique to the epichloe endophytes. The prenyltransferase ltmF is involved in the 27-hydroxyl-O-prenylation. The cytochrome P450 monooxygenase ltmK is required for the oxidative acetal ring formation. The multi-functional prenyltransferase ltmE is required for C20- and C21-prenylations of the indole ring of paspalanes and acts together with the cytochrome P450 monooxygenase ltmJ to yield lolitremanes by multiple oxidations and ring closures. The stereoisomer pairs of lolitriol and lolitrem N or lolitrem B and lolitrem F may be attributed to variations in the way in which ring closure can occur under the action of ltmJ. While the major product of this pathway is lolitrem B, the prenyl transferases and cytochrome P450 monooxygenases identified in this pathway have a remarkable versatility in their regio- and stereo-specificities to generate a diverse range of metabolites that are products of a metabolic grid rather than a linear pathway. The polypeptide is Lolitrem B biosynthesis cluster protein S (Epichloe festucae (strain Fl1)).